A 93-amino-acid chain; its full sequence is MMKTAVMFILVVVISLTYSSEEQEVARTYCGRHLANILAYVCFGVEKRGGAQYAPYWQETYLRSRKGPGVVDECCFRPCKLEVLKSFFFFFCD.

The signal sequence occupies residues Met-1–Glu-22. Disulfide bonds link Cys-30-Cys-75, Cys-42-Cys-92, and Cys-74-Cys-79. Residues Gly-49–Ser-64 constitute a propeptide, bombyxin B-11 C peptide.

Belongs to the insulin family. In terms of assembly, heterodimer of a B chain and an A chain linked by two disulfide bonds.

Its subcellular location is the secreted. Brain peptide responsible for activation of prothoracic glands to produce ecdysone in insects. This Bombyx mori (Silk moth) protein is Bombyxin B-11 (BBXB11).